Here is a 908-residue protein sequence, read N- to C-terminus: Mycobactin import ATP-binding/permease protein IrtA (908 aa).

Residues 1–329 (MARGFQGVML…SRLLAPLKKP (329 aa)) lie on the Cytoplasmic side of the membrane. The 110-residue stretch at 15 to 124 (ARDHQATVVD…MGSRGFSVPE (110 aa)) folds into the FAD-binding FR-type domain. Residues 16-245 (RDHQATVVDK…AQAYWTEGRA (230 aa)) form a siderophore interaction domain region. FAD is bound by residues 70–73 (RAYT), 87–91 (DMVLH), 97–98 (AS), and 241–243 (TEG). Residues 245–311 (AMGSSRGETS…GAAQPRTPVR (67 aa)) are disordered. Residues 253-309 (TSTPAKPAAKTAPAKAAAKPAAASGAGTPEHAAAPAAATTGAPQAAPAPGAAQPRTP) show a composition bias toward low complexity. A helical transmembrane segment spans residues 330–350 (LIVSGVLQALITLIELAPFVL). The ABC transmembrane type-1 domain maps to 331-613 (IVSGVLQALI…IGYGLSGIQT (283 aa)). The Periplasmic portion of the chain corresponds to 351-371 (LVELARLLLGGAEAERLWTLG). A helical membrane pass occupies residues 372-392 (LTAVSLIGLGAVLAAAMTLWL). At 393 to 444 (HRVDARFAHELRGRLLTKLSRLPLGWFTRRGSASTKQLVQDDTLALHYLITH) the chain is on the cytoplasmic side. A helical membrane pass occupies residues 445–465 (AIPDAVAAVVAPVAVLVYLFV). Over 466–469 (ADWR) the chain is Periplasmic. The chain crosses the membrane as a helical span at residues 470–490 (VALVLFIPVLVYLVLMSVMTI). Over 491–557 (QSGSKIAQAP…PFVGKKTLMD (67 aa)) the chain is Cytoplasmic. A helical transmembrane segment spans residues 558 to 578 (LVTRPATFLWIILVAGVPLVV). Residues 579–586 (TGRMDPVN) are Periplasmic-facing. Residues 587 to 607 (LLPFLLLGTTFGARLLGIGYG) form a helical membrane-spanning segment. Over 608–908 (LSGIQTGMLA…VSADAVEVGR (301 aa)) the chain is Cytoplasmic. The ABC transporter domain occupies 654–887 (VELDRVSFEY…GGRYRGLWDS (234 aa)). Residue 687-694 (GPSGSGKS) coordinates ATP.

This sequence belongs to the ABC transporter superfamily. Siderophore-Fe(3+) uptake transporter (SIUT) (TC 3.A.1.21) family. In terms of assembly, forms a heterodimer with IrtB. It depends on FAD as a cofactor.

Its subcellular location is the cell inner membrane. With respect to regulation, the ATPase activity of IrtAB is stimulated more than 38-fold in the presence of Fe-MBT, and more than 10-fold in the presence of Fe-cMBT. Part of the ABC transporter complex IrtAB involved in the import of iron-bound mycobactin (Fe-MBT) and carboxymycobactin (Fe-cMBT). Has a preference for Fe-MBT over Fe-cMBT. Mycobactins are then reduced by the siderophore interaction domain to facilitate iron release in the bacterial cell. Transmembrane domains (TMD) form a pore in the membrane and the ATP-binding domain (NBD) is responsible for energy generation. This Mycolicibacterium thermoresistibile (strain ATCC 19527 / DSM 44167 / CIP 105390 / JCM 6362 / NCTC 10409 / 316) (Mycobacterium thermoresistibile) protein is Mycobactin import ATP-binding/permease protein IrtA.